The primary structure comprises 130 residues: Anti-adapter protein IraD (130 aa).

The protein belongs to the GpW/Gp25 family. IraD subfamily. As to quaternary structure, interacts with RssB.

Its subcellular location is the cytoplasm. Its function is as follows. Inhibits RpoS proteolysis by regulating RssB activity, thereby increasing the stability of the sigma stress factor RpoS during oxidative stress. Its effect on RpoS stability is due to its interaction with RssB, which probably blocks the interaction of RssB with RpoS, and the consequent delivery of the RssB-RpoS complex to the ClpXP protein degradation pathway. The sequence is that of Anti-adapter protein IraD from Escherichia coli O139:H28 (strain E24377A / ETEC).